The sequence spans 123 residues: Large ribosomal subunit protein bL12 (123 aa).

The protein belongs to the bacterial ribosomal protein bL12 family. In terms of assembly, homodimer. Part of the ribosomal stalk of the 50S ribosomal subunit. Forms a multimeric L10(L12)X complex, where L10 forms an elongated spine to which 2 to 4 L12 dimers bind in a sequential fashion. Binds GTP-bound translation factors.

Forms part of the ribosomal stalk which helps the ribosome interact with GTP-bound translation factors. Is thus essential for accurate translation. The polypeptide is Large ribosomal subunit protein bL12 (Shewanella amazonensis (strain ATCC BAA-1098 / SB2B)).